Here is a 139-residue protein sequence, read N- to C-terminus: Centromere protein S (139 aa).

The disordered stretch occupies residues 99-139; the sequence is ELASSNMEQKEKKKKKSSAAKGRKTEENETPVTESEDSNMA. The span at 110–120 shows a compositional bias: basic residues; that stretch reads KKKKKSSAAKG.

Belongs to the TAF9 family. CENP-S/MHF1 subfamily. Heterodimer with CENPX, sometimes called MHF; this interaction stabilizes both partners. MHF heterodimers can assemble to form tetrameric structures. MHF also coassemble with CENPT-CENPW heterodimers at centromeres to form the tetrameric CENP-T-W-S-X complex. Forms a discrete complex with FANCM and CENPX, called FANCM-MHF; this interaction, probably mediated by direct binding between CENPS and FANCM, leads to synergistic activation of double-stranded DNA binding and strongly stimulates FANCM-mediated DNA remodeling. Recruited by FANCM to the Fanconi anemia (FA) core complex, which consists of CENPS, CENPX, FANCA, FANCB, FANCC, FANCE, FANCF, FANCG, FANCL, FANCM, FAAP24 and FAAP100. The FA core complex associates with Bloom syndrome (BLM) complex, which consists of at least BLM, DNA topoisomerase 3-alpha (TOP3A), RMI1/BLAP75, RPA1/RPA70 and RPA2/RPA32. The super complex between FA and BLM is called BRAFT. Component of the CENPA-CAD complex, composed of CENPI, CENPK, CENPL, CENPO, CENPP, CENPQ, CENPR and CENPS. The CENPA-CAD complex is probably recruited on centromeres by the CENPA-NAC complex, at least composed of CENPA, CENPC, CENPH, CENPM, CENPN, CENPT and CENPU.

It localises to the nucleus. The protein localises to the chromosome. It is found in the centromere. Its subcellular location is the kinetochore. Its function is as follows. DNA-binding component of the Fanconi anemia (FA) core complex. Required for the normal activation of the FA pathway, leading to monoubiquitination of the FANCI-FANCD2 complex in response to DNA damage, cellular resistance to DNA cross-linking drugs, and prevention of chromosomal breakage. In complex with CENPX (MHF heterodimer), crucial cofactor for FANCM in both binding and ATP-dependent remodeling of DNA. Stabilizes FANCM. In complex with CENPX and FANCM (but not other FANC proteins), rapidly recruited to blocked forks and promotes gene conversion at blocked replication forks. In complex with CENPT, CENPW and CENPX (CENP-T-W-S-X heterotetramer), involved in the formation of a functional kinetochore outer plate, which is essential for kinetochore-microtubule attachment and faithful mitotic progression. As a component of MHF and CENP-T-W-S-X complexes, binds DNA and bends it to form a nucleosome-like structure. DNA-binding function is fulfilled in the presence of CENPX, with the following preference for DNA substates: Holliday junction &gt; double-stranded &gt; splay arm &gt; single-stranded. Does not bind DNA on its own. This chain is Centromere protein S (CENPS), found in Gallus gallus (Chicken).